The chain runs to 351 residues: Uroporphyrinogen decarboxylase (351 aa).

Substrate-binding positions include 25–29 (RQAGR), D74, Y151, S206, and H325.

The protein belongs to the uroporphyrinogen decarboxylase family. Homodimer.

The protein localises to the cytoplasm. The enzyme catalyses uroporphyrinogen III + 4 H(+) = coproporphyrinogen III + 4 CO2. Its pathway is porphyrin-containing compound metabolism; protoporphyrin-IX biosynthesis; coproporphyrinogen-III from 5-aminolevulinate: step 4/4. In terms of biological role, catalyzes the decarboxylation of four acetate groups of uroporphyrinogen-III to yield coproporphyrinogen-III. This chain is Uroporphyrinogen decarboxylase, found in Chlorobium phaeobacteroides (strain BS1).